The chain runs to 261 residues: WW domain-binding protein 2 (261 aa).

The GRAM domain occupies 1 to 84 (MALNKNHSEG…YLMKDCEIKQ (84 aa)). At Tyr192 the chain carries Phosphotyrosine; by YES and SRC. The PPxY motif 1 motif lies at 196 to 200 (PPPPY). Positions 196 to 209 (PPPPYPGPMEPPVS) are enriched in pro residues. Residues 196–261 (PPPPYPGPME…YYPPEDKKTQ (66 aa)) are disordered. Over residues 218–230 (AAEAKAAEAAASA) the composition is skewed to low complexity. A Phosphotyrosine; by YES and SRC modification is found at Tyr231. Positions 245-254 (SQPPPPPYYP) are enriched in pro residues. The short motif at 248 to 252 (PPPPY) is the PPxY motif 2 element.

As to quaternary structure, binds to the WW domain of YAP1, WWP1 and WWP2. Interacts with NEDD4. Interacts with ESR1 and UBE3A. In terms of processing, phosphorylated in repsonse to EGF as well as estrogen and progesterone hormones. Tyr-192 and Tyr-231 are phosphorylated by YES and SRC inducing nuclear translocation. Ubiquitous.

The protein localises to the cytoplasm. It localises to the nucleus. Functionally, acts as a transcriptional coactivator of estrogen and progesterone receptors (ESR1 and PGR) upon hormone activation. In presence of estrogen, binds to ESR1-responsive promoters. Synergizes with YAP1 to enhance PGR activity. Modulates expression of post-synaptic scaffolding proteins via regulation of ESR1, ESR2 and PGR. The protein is WW domain-binding protein 2 of Homo sapiens (Human).